Consider the following 221-residue polypeptide: Protein myomaker (221 aa).

Topologically, residues 1 to 3 are extracellular; it reads MGT. Residues 4–24 traverse the membrane as a helical segment; that stretch reads VVAKLLLPTLSSLAFLPTVSI. The Cytoplasmic portion of the chain corresponds to 25-29; that stretch reads ATKRR. Residues 30-50 traverse the membrane as a helical segment; it reads FYMEAMVYLFTMFFVAFSHAC. The Extracellular segment spans residues 51-64; that stretch reads DGPGLSVLCFMRRD. Residues 65-85 traverse the membrane as a helical segment; that stretch reads ILEYFSIYGTALSMWVSLMAL. Over 86–93 the chain is Cytoplasmic; that stretch reads ADFDEPQR. A helical membrane pass occupies residues 94–110; that stretch reads STFTMLGVLTIAVRTFH. The Extracellular portion of the chain corresponds to 111-113; the sequence is DRW. A helical membrane pass occupies residues 114-134; sequence GYGVYSGPIGTATLIIAVKWL. At 135–153 the chain is on the cytoplasmic side; it reads KKMKEKKGLYPDKSIYTQQ. A helical transmembrane segment spans residues 154–174; sequence IGPGLCFGALALMLRFFFEEW. Position 175 (Asp175) is a topological domain, extracellular. The chain crosses the membrane as a helical span at residues 176–196; that stretch reads YTYVHSFYHCALAMSFVLLLP. Residues 197–221 are Cytoplasmic-facing; the sequence is KVNKKAGNAGAPAKLTFSTLCCTCV. S-palmitoyl cysteine attachment occurs at residues Cys217 and Cys218.

Belongs to the TMEM8 family. In terms of assembly, interacts with MYMX. Palmitoylated at the C-terminus; palmitoylation promotes localization to the Golgi apparatus. In terms of tissue distribution, specifically expressed in skeletal muscle during embryogenesis and adult muscle regeneration.

It is found in the cell membrane. The protein localises to the golgi apparatus membrane. Functionally, myoblast-specific protein that mediates myoblast fusion, an essential step for the formation of multi-nucleated muscle fibers. Actively participates in the membrane fusion reaction by mediating the mixing of cell membrane lipids (hemifusion) upstream of MYMX. Acts independently of MYMX. Involved in skeletal muscle regeneration in response to injury by mediating the fusion of satellite cells, a population of muscle stem cells, with injured myofibers. Also involved in skeletal muscle hypertrophy, probably by mediating the fusion of satellite cells with myofibers. This Mus musculus (Mouse) protein is Protein myomaker.